The sequence spans 970 residues: Serine/threonine-protein kinase PLK4 (970 aa).

Residues 12 to 265 (FKVGNLLGKG…LSSVLDHPFM (254 aa)) form the Protein kinase domain. ATP is bound by residues 18–26 (LGKGSFAGV) and K41. K45 and K46 each carry N6-acetyllysine. D136 serves as the catalytic Proton acceptor. 2 disordered regions span residues 323-458 (TVFP…NHLC) and 497-538 (SISP…HSVK). Positions 328–356 (NKSSTDFSSSGDGNSFYTQWGNQETSNSG) are enriched in polar residues. Positions 360 to 369 (VIQDAEERPH) are enriched in basic and acidic residues. Over residues 379 to 393 (SDRSGTSNSQSQAKT) the composition is skewed to polar residues. Residue S401 is modified to Phosphoserine. Residues 438–454 (SSSSGSFERPDNNQALS) show a composition bias toward polar residues. Residues 504–515 (FQGHPDLQKDTS) show a composition bias toward basic and acidic residues. The region spanning 586–699 (TLRSITSPLV…SRFVQLVRSK (114 aa)) is the Cryptic POLO box 1 (CPB1) domain. S665 is modified (phosphoserine). Positions 700–813 (SPKITYFTRY…GRKPGSTSSP (114 aa)) constitute a Cryptic POLO box 2 (CPB2) domain. Residues 808–828 (GSTSSPKALSPPPSVDSNYPT) are disordered. S817 is modified (phosphoserine). A POLO box domain is found at 886-964 (QLLKSVFVKN…LSSILLMFSN (79 aa)).

It belongs to the protein kinase superfamily. Ser/Thr protein kinase family. CDC5/Polo subfamily. Homodimer. Interacts with CEP152 (via N-terminus). Interacts with CEP78; this interaction may be important for proper PLK4 localization to the centriole and PLK4-induced overduplication of centrioles. Interacts with CEP131. Interacts simultaneously with TENT5C and CEP192. Interacts with TENT5C; this interaction leads to the TENT5C recruitment in the centrosome. Interacts with CEP85; this interaction may be important in cell migration and centriole assembly. Post-translationally, acetylation by KAT2A and KAT2B impairs kinase activity by shifting the kinase to an inactive conformation. In terms of processing, ubiquitinated; leading to its degradation by the proteasome. Deubiquitinated by USP54; leading to PLK4 stabilization. Tyrosine-phosphorylated by TEC.

It localises to the cytoplasm. The protein localises to the cytoskeleton. It is found in the microtubule organizing center. Its subcellular location is the centrosome. The protein resides in the centriole. It localises to the nucleus. The protein localises to the nucleolus. It is found in the cleavage furrow. The catalysed reaction is L-seryl-[protein] + ATP = O-phospho-L-seryl-[protein] + ADP + H(+). The enzyme catalyses L-threonyl-[protein] + ATP = O-phospho-L-threonyl-[protein] + ADP + H(+). Serine/threonine-protein kinase that plays a central role in centriole duplication. Able to trigger procentriole formation on the surface of the parental centriole cylinder, leading to the recruitment of centriole biogenesis proteins such as SASS6, CPAP, CCP110, CEP135 and gamma-tubulin. When overexpressed, it is able to induce centrosome amplification through the simultaneous generation of multiple procentrioles adjoining each parental centriole during S phase. Phosphorylates 'Ser-151' of FBXW5 during the G1/S transition, leading to inhibit FBXW5 ability to ubiquitinate SASS6. Its central role in centriole replication suggests a possible role in tumorigenesis, centrosome aberrations being frequently observed in tumors. Also involved in deuterosome-mediated centriole amplification in multiciliated that can generate more than 100 centrioles. Also involved in trophoblast differentiation by phosphorylating HAND1, leading to disrupt the interaction between HAND1 and MDFIC and activate HAND1. Phosphorylates CDC25C and CHEK2. Required for the recruitment of STIL to the centriole and for STIL-mediated centriole amplification. Phosphorylates CEP131 at 'Ser-78' and PCM1 at 'Ser-372' which is essential for proper organization and integrity of centriolar satellites. This chain is Serine/threonine-protein kinase PLK4, found in Homo sapiens (Human).